The chain runs to 166 residues: Phosphopantetheine adenylyltransferase (166 aa).

Serine 9 is a binding site for substrate. Residues 9 to 10 (SF) and histidine 17 contribute to the ATP site. Residues lysine 41, leucine 74, and lysine 88 each contribute to the substrate site. Residues 89 to 91 (GLR), glutamate 99, and 123 to 129 (YVHLSST) each bind ATP.

The protein belongs to the bacterial CoaD family. Homohexamer. Requires Mg(2+) as cofactor.

Its subcellular location is the cytoplasm. It carries out the reaction (R)-4'-phosphopantetheine + ATP + H(+) = 3'-dephospho-CoA + diphosphate. Its pathway is cofactor biosynthesis; coenzyme A biosynthesis; CoA from (R)-pantothenate: step 4/5. Reversibly transfers an adenylyl group from ATP to 4'-phosphopantetheine, yielding dephospho-CoA (dPCoA) and pyrophosphate. The polypeptide is Phosphopantetheine adenylyltransferase (Paenarthrobacter aurescens (strain TC1)).